Here is a 187-residue protein sequence, read N- to C-terminus: UPF0301 protein CKO_04323 (187 aa).

It belongs to the UPF0301 (AlgH) family.

The protein is UPF0301 protein CKO_04323 of Citrobacter koseri (strain ATCC BAA-895 / CDC 4225-83 / SGSC4696).